A 237-amino-acid chain; its full sequence is Phosphoadenosine 5'-phosphosulfate reductase (237 aa).

Catalysis depends on Cys231, which acts as the Nucleophile; cysteine thiosulfonate intermediate.

This sequence belongs to the PAPS reductase family. CysH subfamily.

Its subcellular location is the cytoplasm. The enzyme catalyses [thioredoxin]-disulfide + sulfite + adenosine 3',5'-bisphosphate + 2 H(+) = [thioredoxin]-dithiol + 3'-phosphoadenylyl sulfate. The protein operates within sulfur metabolism; hydrogen sulfide biosynthesis; sulfite from sulfate: step 3/3. Functionally, catalyzes the formation of sulfite from phosphoadenosine 5'-phosphosulfate (PAPS) using thioredoxin as an electron donor. The polypeptide is Phosphoadenosine 5'-phosphosulfate reductase (Xylella fastidiosa (strain M23)).